A 488-amino-acid chain; its full sequence is MPPGGGGPMKDCEYSQISTHSSSPMESPHKKKKIAARRKWEVFPGRNKFFCNGRIMMARQTGVFYLTLVLILVTSGLFFAFDCPYLAVKITPAIPAVAGILFFFVMGTLLRTSFSDPGVLPRATPDEAADLERQIDIANGTSSGGYRPPPRTKEVIINGQTVKLKYCFTCKIFRPPRASHCSLCDNCVERFDHHCPWVGNCVGKRNYRFFYMFILSLSFLTVFIFAFVITHVILRSQQTGFLNALKDSPASVLEAVVCFFSVWSIVGLSGFHTYLISSNQTTNEDIKGSWSNKRGKENYNPYSYGNIFTNCCVALCGPISPSLIDRRGYIQPDTPQPAAPSNGITMYGATQSQSDMCDQDQCIQSTKFVLQAAATPLLQSEPSLTSDELHLPGKPGLGTPCASLTLGPPTPPASMPNLAEATLADVMPRKDEHMGHQFLTPDEAPSPPRLLAAGSPLAHSRTMHVLGLASQDSLHEDSVRGLVKLSSV.

Residues 1–60 are Cytoplasmic-facing; sequence MPPGGGGPMKDCEYSQISTHSSSPMESPHKKKKIAARRKWEVFPGRNKFFCNGRIMMARQ. Residues 61 to 81 form a helical membrane-spanning segment; it reads TGVFYLTLVLILVTSGLFFAF. The Lumenal portion of the chain corresponds to 82 to 89; that stretch reads DCPYLAVK. Residues 90-110 form a helical membrane-spanning segment; the sequence is ITPAIPAVAGILFFFVMGTLL. Residues 111–208 lie on the Cytoplasmic side of the membrane; sequence RTSFSDPGVL…GNCVGKRNYR (98 aa). The DHHC domain occupies 165 to 215; sequence KYCFTCKIFRPPRASHCSLCDNCVERFDHHCPWVGNCVGKRNYRFFYMFIL. The active-site S-palmitoyl cysteine intermediate is the C195. A helical membrane pass occupies residues 209 to 229; that stretch reads FFYMFILSLSFLTVFIFAFVI. Residues 230-255 are Lumenal-facing; the sequence is THVILRSQQTGFLNALKDSPASVLEA. Residues 256 to 276 traverse the membrane as a helical segment; it reads VVCFFSVWSIVGLSGFHTYLI. The Cytoplasmic segment spans residues 277-488; that stretch reads SSNQTTNEDI…VRGLVKLSSV (212 aa). S455 carries the post-translational modification Phosphoserine.

It belongs to the DHHC palmitoyltransferase family. ERF2/ZDHHC9 subfamily. As to expression, widely expressed.

The protein resides in the endoplasmic reticulum membrane. Its subcellular location is the golgi apparatus. It is found in the golgi stack membrane. The enzyme catalyses L-cysteinyl-[protein] + hexadecanoyl-CoA = S-hexadecanoyl-L-cysteinyl-[protein] + CoA. Its function is as follows. Palmitoyltransferase that could catalyze the addition of palmitate onto various protein substrates. May have a palmitoyltransferase activity toward the beta-2 adrenergic receptor/ADRB2 and thereby regulate G protein-coupled receptor signaling. May play a role in cell differentiation and apoptosis. The polypeptide is Palmitoyltransferase ZDHHC14 (Homo sapiens (Human)).